Consider the following 530-residue polypeptide: Probable NADH-specific resorcinol 4-hydroxylase (530 aa).

It catalyses the reaction resorcinol + NADH + O2 + H(+) = benzene-1,2,4-triol + NAD(+) + H2O. Single-component hydroxylase that is part of the gamma-resorcylate (GRA) degradation pathway. GRA is initially converted by GRA decarboxylase to resorcinol, which is hydroxylated by resorcinol 4-hydroxylase. The polypeptide is Probable NADH-specific resorcinol 4-hydroxylase (tsdB) (Rhodococcus jostii (strain RHA1)).